We begin with the raw amino-acid sequence, 184 residues long: Guanylate kinase (184 aa).

One can recognise a Guanylate kinase-like domain in the interval 5 to 183; it reads KKLIIITGPS…TVKEVLKIIK (179 aa). 12–19 is a binding site for ATP; it reads GPSGVGKG.

This sequence belongs to the guanylate kinase family.

It is found in the cytoplasm. It carries out the reaction GMP + ATP = GDP + ADP. Essential for recycling GMP and indirectly, cGMP. In Prochlorococcus marinus subsp. pastoris (strain CCMP1986 / NIES-2087 / MED4), this protein is Guanylate kinase.